Consider the following 398-residue polypeptide: Streptopain (398 aa).

A signal peptide spans 1–27 (MNKKKLGIRLLSLLALGGFVLANPVFA). Positions 28–145 (DQNFARNEKE…TTYAGTAEIK (118 aa)) are excised as a propeptide. The active-site Nucleophile is C192. C192 bears the Cysteine methyl disulfide; in zymogen form mark. Residues S282 and G339 each coordinate a protein. H340 acts as the Proton acceptor in catalysis. Positions 368–390 (RLDALNPSALGTGGGAGGFNGYQ) are C-terminal active site loop.

It belongs to the peptidase C10 family. As to quaternary structure, monomer. In terms of processing, the mature protease is derived from the precursor sequence by cleavage, either in cis via an autocatalytic mechanism, or in trans by mature SpeB or host proteases (trypsin, plasmin or subtilisin). Maturation can involve a number of protein cleavage intermediates. Mature SpeB probably plays the most important role in protein maturation in physiological conditions. Post-translationally, methylthiolation at Cys-192 of the inactive zymogen form is probably involved in the mechanism of secretion of the proteinase into the culture fluid.

Its subcellular location is the secreted. The protein resides in the host extracellular space. It is found in the host cytoplasm. The catalysed reaction is Preferential cleavage with hydrophobic residues at P2, P1 and P1'.. With respect to regulation, synthesized as an inactive zymogen to protect the intracellular components of the bacteria from proteolytic activity during protein production. Once secreted into the extracellular milieu, cleaved into the active protease: maturation can be mediated in cis by autocatalytic cleavage, or in trans by mature SpeB or host proteases. Protease activity is strongly inhibited by zinc and copper, which prevent its maturation into an active protease: inhibition by metal ions may be required to prevent proteolysis of streptococcal proteins. Functionally, cysteine protease that acts as a key streptococcal virulence factor by cleaving host proteins involved in immune response. Triggers inflammation by mediating cleavage of host proteins, which can both promote host pathogenesis by triggering sterile inflammation and/or restrict streptococcal infection, depending on host immune statue and infection site. Cleaves host gasdermin-A (GSDMA) in epithelial cells, promoting GSDMA activation and formation of gasdermin pores, triggering pyroptosis. Pyroptosis triggers the elimination of the infected skin cell, depriving the pathogen of its protective niche, while inducing an inflammatory response. This ultimately prevents bacterial penetration of the epithelial barrier and a subsequent systemic dissemination of the pathogen. Also mediates cleavage of the cytokine precursor interleukin-1 beta (IL1B) to its mature form, resulting in inflammation and septic shock. SpeB-mediated maturation of IL1B plays a dual role depending on infection site: while IL1B inflammatory response prevents bacterial growth during invasive skin infections, it promotes streptococcal infection of the nasopharynx by disrupting colonization resistance mediated by the microbiota. Inhibits host autophagy be catalyzing cleavage and inactivation of key autophagy factors, such as CALCOCO2, NBR1 and SQSTM1. Cleaves and inhibits a number of complement factors, such as C2, C3-beta chain of C3, C4, C5 or SERPING1, thereby promoting evasion of host immunity. May also impair adaptive immunity by catalyzing cleavage and degradation of host immunoglobulins to promote immune system evasion; the relevance of this activity is however unsure in vivo. Catalyzes maturation and release of the peptide hormone bradykinin from the precursor Kininogen-1 (KNG1) to produce hypotension during septic shock. Also involved in bacterial translocation across the host epithelial barrier by mediating cleavage and degradation of host epithelial junction proteins, such as CDH1 and OCLN. Additionally, has been involved in degradation of fibronectin and vitronectin, two host extracellular matrix proteins involved in tissue integrity. Also able to catalyze cleavage and degradation of streptococcal proteins, such as C5a peptidase, EndoS or SmeZ. Degradation of streptococcal proteins is however strictly regulated to preserve integrity of other virulence factors. The sequence is that of Streptopain (speB) from Streptococcus pyogenes serotype M3 (strain ATCC BAA-595 / MGAS315).